A 473-amino-acid polypeptide reads, in one-letter code: Mediator of RNA polymerase II transcription subunit 29 (473 aa).

Residues 1-12 (MSGQGPPSNLTP) show a composition bias toward polar residues. Disordered regions lie at residues 1-319 (MSGQ…NEEQ) and 444-473 (STMEKMRRRQKKWKDQQQQQENAEDAEMAE). Positions 13–50 (QQQHMIMQQQQQQQMMRQQQIQQQQLHQRQLQQQQAQQ) are enriched in low complexity. Residues 51–62 (SYQRSRTPQMQQ) show a composition bias toward polar residues. Composition is skewed to low complexity over residues 111-123 (QMMQQQMGMNQPM) and 130-139 (VSRPGSVAPP). Polar residues-rich tracts occupy residues 148–183 (TGPSSNQMDQMGGQSQYSHHLQPQQPLSRPGSQQSH) and 255–269 (PPGSAQAPSSVQPGS). Composition is skewed to low complexity over residues 272–286 (APGSLQAPASQQPPA) and 294–308 (AASGSVAGPASAAPA).

It belongs to the Mediator complex subunit 29 family. As to quaternary structure, component of the Mediator complex.

The protein resides in the nucleus. Functionally, component of the Mediator complex, a coactivator involved in the regulated transcription of nearly all RNA polymerase II-dependent genes. Mediator functions as a bridge to convey information from gene-specific regulatory proteins to the basal RNA polymerase II transcription machinery. Mediator is recruited to promoters by direct interactions with regulatory proteins and serves as a scaffold for the assembly of a functional preinitiation complex with RNA polymerase II and the general transcription factors. The polypeptide is Mediator of RNA polymerase II transcription subunit 29 (mdt-29) (Caenorhabditis briggsae).